Reading from the N-terminus, the 264-residue chain is Major prion protein (264 aa).

The first 24 residues, 1-24 (MVKSHIGSWILVLFVAMWSDVGLC), serve as a signal peptide directing secretion. Residues 25–241 (KKRPKPGGGW…ESQAYYQRGA (217 aa)) are interaction with GRB2, ERI3 and SYN1. A disordered region spans residues 28–118 (PKPGGGWNTG…QWNKPSKPKT (91 aa)). A run of 6 repeats spans residues 54–62 (PQGGGSWGQ), 63–70 (PHGGGWGQ), 71–78 (PHGGSWGQ), 79–86 (PHGGGWGQ), 87–94 (PHGGGWGQ), and 95–103 (PHGGGGWGQ). Positions 54-103 (PQGGGSWGQPHGGGWGQPHGGSWGQPHGGGWGQPHGGGWGQPHGGGGWGQ) are 6 X 8 AA tandem repeats of P-H-G-G-G-W-G-Q. A compositionally biased stretch (gly residues) spans 55-107 (QGGGSWGQPHGGGWGQPHGGSWGQPHGGGWGQPHGGGWGQPHGGGGWGQGGTH). Cu(2+) contacts are provided by H72, G73, G74, H80, G81, G82, H88, G89, G90, H96, G98, and G99. C190 and C225 are disulfide-bonded. 2 N-linked (GlcNAc...) asparagine glycosylation sites follow: N192 and N208. A241 is lipidated: GPI-anchor amidated alanine. A propeptide spans 242-264 (SVVLFSSPPVVLLISFLIFLIVG) (removed in mature form).

The protein belongs to the prion family. In terms of assembly, monomer and homodimer. Has a tendency to aggregate into amyloid fibrils containing a cross-beta spine, formed by a steric zipper of superposed beta-strands. Soluble oligomers may represent an intermediate stage on the path to fibril formation. Copper binding may promote oligomerization. Interacts with GRB2, APP, ERI3/PRNPIP and SYN1. Mislocalized cytosolically exposed PrP interacts with MGRN1; this interaction alters MGRN1 subcellular location and causes lysosomal enlargement. Interacts with KIAA1191.

Its subcellular location is the cell membrane. It is found in the golgi apparatus. Its primary physiological function is unclear. Has cytoprotective activity against internal or environmental stresses. May play a role in neuronal development and synaptic plasticity. May be required for neuronal myelin sheath maintenance. May play a role in iron uptake and iron homeostasis. Soluble oligomers are toxic to cultured neuroblastoma cells and induce apoptosis (in vitro). Association with GPC1 (via its heparan sulfate chains) targets PRNP to lipid rafts. Also provides Cu(2+) or Zn(2+) for the ascorbate-mediated GPC1 deaminase degradation of its heparan sulfate side chains. In Boselaphus tragocamelus (Nilgai), this protein is Major prion protein (PRNP).